An 88-amino-acid chain; its full sequence is uncharacterized protein (88 aa).

This is an uncharacterized protein from Mycobacterium tuberculosis (strain CDC 1551 / Oshkosh).